The following is a 348-amino-acid chain: Rhodopsin (348 aa).

Met1 is subject to N-acetylmethionine. Over 1–36 the chain is Extracellular; the sequence is MNGTEGPNFYVPFSNVTGVVRSPFEQPQYYLAEPWQ. 2 N-linked (GlcNAc...) asparagine glycosylation sites follow: Asn2 and Asn15. A helical transmembrane segment spans residues 37–61; that stretch reads FSMLAAYMFLLIVLGFPINFLTLYV. The Cytoplasmic segment spans residues 62 to 73; it reads TVQHKKLRTPLN. A helical transmembrane segment spans residues 74-96; sequence YILLNLAVADLFMVFGGFTTTLY. Over 97 to 110 the chain is Extracellular; sequence TSLHGYFVFGPTGC. The cysteines at positions 110 and 187 are disulfide-linked. A helical transmembrane segment spans residues 111–133; it reads NLEGFFATLGGEIALWSLVVLAI. The short motif at 134–136 is the 'Ionic lock' involved in activated form stabilization element; the sequence is ERY. At 134–152 the chain is on the cytoplasmic side; that stretch reads ERYVVVCKPMSNFRFGENH. A helical transmembrane segment spans residues 153-173; sequence AIMGVVFTWIMALACAAPPLV. The Extracellular segment spans residues 174 to 202; the sequence is GWSRYIPEGMQCSCGIDYYTLKPEVNNES. Glu201 contacts Zn(2+). The chain crosses the membrane as a helical span at residues 203 to 224; that stretch reads FVIYMFVVHFTIPMIVIFFCYG. Topologically, residues 225 to 252 are cytoplasmic; that stretch reads QLVFTVKEAAAQQQESATTQKAEKEVTR. Residues 253–274 form a helical membrane-spanning segment; the sequence is MVIIMVIFFLICWLPYASVAFY. Topologically, residues 275 to 286 are extracellular; it reads IFTHQGSNFGPI. Gln279 contributes to the Zn(2+) binding site. A helical membrane pass occupies residues 287–308; that stretch reads FMTLPAFFAKSSSIYNPVIYIM. Lys296 is modified (N6-(retinylidene)lysine). Residues 309–348 lie on the Cytoplasmic side of the membrane; the sequence is LNKQFRNCMLTTLCCGKNPLGDDDASATASKTETSQVAPA. S-palmitoyl cysteine attachment occurs at residues Cys322 and Cys323. Residues 330–348 form an interaction with SAG region; sequence DDDASATASKTETSQVAPA. Ser334 is modified (phosphoserine). The residue at position 336 (Thr336) is a Phosphothreonine. Ser338 bears the Phosphoserine mark. A phosphothreonine mark is found at Thr340 and Thr342. The residue at position 343 (Ser343) is a Phosphoserine.

It belongs to the G-protein coupled receptor 1 family. Opsin subfamily. As to quaternary structure, homodimer. May form a complex composed of RHO, GRK1 and RCVRN in a Ca(2+)-dependent manner; RCVRN prevents the interaction between GRK1 and RHO. Interacts with GRK1. Interacts (phosphorylated form) with SAG. Interacts with GNAT1. Interacts with GNAT3. SAG and G-proteins compete for a common binding site. Interacts with PRCD; the interaction promotes PRCD stability. Forms a complex with ASAP1 and ARF4. Forms a complex with ASAP1, RAB11A, Rabin8/RAB3IP, ARF4 and RAB11FIP3; the complex regulates Golgi-to-cilia rhodopsin/RHO transport in photoreceptors. Phosphorylated on some or all of the serine and threonine residues present in the C-terminal region. Post-translationally, contains one covalently linked retinal chromophore. Upon light absorption, the covalently bound 11-cis-retinal is converted to all-trans-retinal. After hydrolysis of the Schiff base and release of the covalently bound all-trans-retinal, active rhodopsin is regenerated by binding of a fresh molecule of 11-cis-retinal. As to expression, rod-shaped photoreceptor cells in the retina (at protein level).

The protein localises to the membrane. Its subcellular location is the cell projection. It is found in the cilium. It localises to the photoreceptor outer segment. Its function is as follows. Photoreceptor required for image-forming vision at low light intensity. Required for photoreceptor cell viability after birth. Light-induced isomerization of 11-cis to all-trans retinal triggers a conformational change that activates signaling via G-proteins. Subsequent receptor phosphorylation mediates displacement of the bound G-protein alpha subunit by the arrestin SAG and terminates signaling. This is Rhodopsin (Rho) from Mus musculus (Mouse).